Consider the following 315-residue polypeptide: Bifunctional pinoresinol-lariciresinol reductase (315 aa).

NADP(+)-binding positions include 14–20 (GGTGYLG), arginine 39, and lysine 48. The Proton acceptor role is filled by lysine 142. NADP(+) is bound at residue arginine 146. Histidine 274 contacts substrate.

It belongs to the NmrA-type oxidoreductase family. Isoflavone reductase subfamily. Dimer.

The catalysed reaction is (+)-lariciresinol + NADP(+) = (+)-pinoresinol + NADPH + H(+). The enzyme catalyses (-)-secoisolariciresinol + NADP(+) = (+)-lariciresinol + NADPH + H(+). Functionally, reductase involved in lignan (-)-hinokinin biosynthesis. Catalyzes the enantioselective conversion of (+)-pinoresinol into (+)-lariciresinol and of (+)-lariciresinol into (-)-secoisolariciresinol. Abstracts the 4R-hydride from the NADPH cofactor during catalysis. Has also a low phenylcoumaran benzylic ether reductase activity. The sequence is that of Bifunctional pinoresinol-lariciresinol reductase (PLR_Lc1) from Linum corymbulosum (Linum).